Consider the following 790-residue polypeptide: Vacuolar protein sorting-associated protein 35B (790 aa).

Belongs to the VPS35 family. Component of the retromer complex which consists of VPS29 (MAG1), VPS26 (VPS26A or VPS26B), VPS35 (VPS35A or VPS35B or VPS35C), VPS5/17 (SNX1 or SNX2A or SNX2B). Component of a retromer subcomplex consisting of VPS29 (MAG1), VPS26 (VPS26A or VPS26B), VPS35 (VPS35A or VPS35B or VPS35C). As to expression, expressed in siliques and maturing seeds (at protein level).

It is found in the cytoplasm. Its subcellular location is the endosome membrane. The protein localises to the prevacuolar compartment membrane. The protein resides in the golgi apparatus. It localises to the trans-Golgi network membrane. Plays a role in vesicular protein sorting. Component of the membrane-associated retromer complex which is essential in endosome-to-Golgi retrograde transport. Also involved in the efficient sorting of seed storage proteins globulin 12S and albumin 2S. The VPS29-VPS26-VPS35 subcomplex may be involved in recycling of specific cargos from endosome to the plasma membrane. The protein is Vacuolar protein sorting-associated protein 35B (VPS35B) of Arabidopsis thaliana (Mouse-ear cress).